The following is a 631-amino-acid chain: tRNA uridine 5-carboxymethylaminomethyl modification enzyme MnmG (631 aa).

15 to 20 is a binding site for FAD; the sequence is GAGHAG. The segment at 203–232 is disordered; the sequence is TPPRVDGNTVDYSKTQEEPGDKEPRHFSYT. A compositionally biased stretch (basic and acidic residues) spans 216–232; it reads KTQEEPGDKEPRHFSYT. NAD(+) is bound at residue 276-290; that stretch reads GPRYCPSIEDKVVRF.

It belongs to the MnmG family. As to quaternary structure, homodimer. Heterotetramer of two MnmE and two MnmG subunits. FAD serves as cofactor.

The protein resides in the cytoplasm. Functionally, NAD-binding protein involved in the addition of a carboxymethylaminomethyl (cmnm) group at the wobble position (U34) of certain tRNAs, forming tRNA-cmnm(5)s(2)U34. The protein is tRNA uridine 5-carboxymethylaminomethyl modification enzyme MnmG of Lactobacillus gasseri (strain ATCC 33323 / DSM 20243 / BCRC 14619 / CIP 102991 / JCM 1131 / KCTC 3163 / NCIMB 11718 / NCTC 13722 / AM63).